The primary structure comprises 505 residues: NADH-quinone oxidoreductase subunit N (505 aa).

The next 14 membrane-spanning stretches (helical) occupy residues 20–40, 59–79, 83–103, 115–135, 137–157, 172–192, 220–240, 251–271, 285–305, 314–334, 342–362, 394–414, 431–451, and 481–501; these read ALAP…GDLF, ALAL…GGVF, GLAA…ALMS, GEYY…VSAG, AIVL…LVAL, FLMG…LYGL, AVVA…TVPF, APTT…FAVL, LWSD…NIAA, MLAY…AACT, AAYL…IIYL, LAAV…TAGF, ITVV…LGVA, and AVCL…LFWI.

Belongs to the complex I subunit 2 family. In terms of assembly, NDH-1 is composed of 14 different subunits. Subunits NuoA, H, J, K, L, M, N constitute the membrane sector of the complex.

Its subcellular location is the cell inner membrane. The catalysed reaction is a quinone + NADH + 5 H(+)(in) = a quinol + NAD(+) + 4 H(+)(out). In terms of biological role, NDH-1 shuttles electrons from NADH, via FMN and iron-sulfur (Fe-S) centers, to quinones in the respiratory chain. The immediate electron acceptor for the enzyme in this species is believed to be ubiquinone. Couples the redox reaction to proton translocation (for every two electrons transferred, four hydrogen ions are translocated across the cytoplasmic membrane), and thus conserves the redox energy in a proton gradient. The chain is NADH-quinone oxidoreductase subunit N from Desulfovibrio desulfuricans (strain ATCC 27774 / DSM 6949 / MB).